Reading from the N-terminus, the 66-residue chain is Beta-toxin Cb3 (66 aa).

In terms of domain architecture, LCN-type CS-alpha/beta spans 1-66 (KEGYIVNYYD…VWPLPNKTCL (66 aa)). 4 disulfides stabilise this stretch: Cys12-Cys65, Cys16-Cys41, Cys25-Cys46, and Cys29-Cys48.

The protein belongs to the long (4 C-C) scorpion toxin superfamily. Sodium channel inhibitor family. Beta subfamily. In terms of tissue distribution, expressed by the venom gland.

It is found in the secreted. Its function is as follows. Beta toxins bind voltage-independently at site-4 of sodium channels (Nav) and reduces peak current and shifts the voltage of activation toward more negative potentials thereby affecting sodium channel activation and promoting spontaneous and repetitive firing. Has an inhibitory effect on voltage-gated sodium channels hNav1.1/SCN1A, hNav1.2/SCN2A, hNav1.4/SCN4A and hNav1.6/SCN8A. Reduces the peak current of hNav1.5/SCN5A but does not shift its voltage of activation. Also affects the inactivation processes of hNav1.1/SCN1A, hNav1.4/SCN4A, hNav1.5/SCN5A and hNav1.6/SCN8A. This toxin is active against mammals and lethal to mice. The sequence is that of Beta-toxin Cb3 from Centruroides baergi (Scorpion).